The following is a 611-amino-acid chain: Major facilitator superfamily domain-containing protein YCR023C (611 aa).

The Extracellular portion of the chain corresponds to 1–89; sequence MARQKLTFKE…GRFSEKHGRK (89 aa). The helical transmembrane segment at 90–110 threads the bilayer; it reads ITLTCGLIGTSVSLLILGFSR. The Cytoplasmic segment spans residues 111 to 152; that stretch reads NFYQALVARSLMGLLNGNVGVIRTIIGEIATERKHQALAFST. A helical membrane pass occupies residues 153 to 173; it reads MPLLFQFGAVVGPMIGGFLVF. Residues 174-199 are Extracellular-facing; that stretch reads RDGTMNEVPLWFPHFAKRIIRSYPYA. Residues 200 to 220 form a helical membrane-spanning segment; sequence LPNVVVCMFLMFGLTNATLFL. Residues 221 to 353 lie on the Cytoplasmic side of the membrane; sequence EETHPAFKDR…SIFHHVFHTK (133 aa). Basic and acidic residues predominate over residues 261–271; it reads DDSENIHHRNE. Residues 261 to 301 are disordered; that stretch reads DDSENIHHRNENVNSIRGQDSEEDENSPLVNTTNDDDTESI. The residue at position 313 (serine 313) is a Phosphoserine. Residues 354–372 traverse the membrane as a helical segment; that stretch reads VFYPISVNFIMALHLIVYN. At 373-413 the chain is on the extracellular side; it reads EFLPVFLAYDLAVDPENPKKLASKFPWKISGGIGYEPEQTG. A helical transmembrane segment spans residues 414–434; sequence TLLSTTGIFGCFVVIFIFPIV. At 435 to 442 the chain is on the cytoplasmic side; sequence DRNFDCLT. Residues 443 to 463 form a helical membrane-spanning segment; that stretch reads IFRTLVKLYPIMYVMVPYVVF. Residues 464–542 lie on the Extracellular side of the membrane; the sequence is LQNERIPSWY…YIMSWSQQND (79 aa). The helical transmembrane segment at 543 to 563 threads the bilayer; the sequence is VAWVSWWSLSLFCMVALYQSY. Residues 564–611 lie on the Cytoplasmic side of the membrane; sequence KIAPIDDNENELHGQGSEDAYNSQSQSSDLRMAHRSSLSSLSNQRCTT. Position 603 is a phosphoserine (serine 603).

This sequence belongs to the major facilitator superfamily.

The protein localises to the membrane. The enzyme catalyses chloride(in) = chloride(out). In terms of biological role, outward-rectifying chloride channel involved in chloride homeostasis. The sequence is that of Major facilitator superfamily domain-containing protein YCR023C from Saccharomyces cerevisiae (strain ATCC 204508 / S288c) (Baker's yeast).